Here is a 403-residue protein sequence, read N- to C-terminus: 3-oxoacyl-[acyl-carrier-protein] synthase 2 (403 aa).

Residues 1–403 (VITGMGALSP…GGHNAVLVFK (403 aa)) form the Ketosynthase family 3 (KS3) domain. Residues C158, H297, and H334 each act as for beta-ketoacyl synthase activity in the active site.

The protein belongs to the thiolase-like superfamily. Beta-ketoacyl-ACP synthases family.

It carries out the reaction a fatty acyl-[ACP] + malonyl-[ACP] + H(+) = a 3-oxoacyl-[ACP] + holo-[ACP] + CO2. The enzyme catalyses (9Z)-hexadecenoyl-[ACP] + malonyl-[ACP] + H(+) = 3-oxo-(11Z)-octadecenoyl-[ACP] + holo-[ACP] + CO2. It functions in the pathway lipid metabolism; fatty acid biosynthesis. Functionally, involved in the type II fatty acid elongation cycle. Catalyzes the elongation of a wide range of acyl-ACP by the addition of two carbons from malonyl-ACP to an acyl acceptor. Can efficiently catalyze the conversion of palmitoleoyl-ACP (cis-hexadec-9-enoyl-ACP) to cis-vaccenoyl-ACP (cis-octadec-11-enoyl-ACP), an essential step in the thermal regulation of fatty acid composition. The polypeptide is 3-oxoacyl-[acyl-carrier-protein] synthase 2 (fabF) (Staphylococcus aureus).